The chain runs to 485 residues: G2/mitotic-specific cyclin-A1 (485 aa).

The interval 1 to 24 (MRSALSLKPSNGNAAKSQAVNNKN) is disordered. The span at 8 to 24 (KPSNGNAAKSQAVNNKN) shows a compositional bias: polar residues.

It belongs to the cyclin family. Cyclin AB subfamily. Expressed in the cell lineages ABarp, C and E as well as the NSM neuroblasts.

In terms of biological role, involved in the control of the cell cycle after S phase. May bind to and activate cdk-1 and/or cdk-2 to promote cell cycle progression. Necessary for embryogenesis. The protein is G2/mitotic-specific cyclin-A1 (cya-1) of Caenorhabditis elegans.